A 430-amino-acid polypeptide reads, in one-letter code: Adenylosuccinate synthetase (430 aa).

GTP-binding positions include 12-18 (GDEGKGK) and 40-42 (GHT). The Proton acceptor role is filled by Asp13. The Mg(2+) site is built by Asp13 and Gly40. IMP is bound by residues 13–16 (DEGK), 38–41 (NAGH), Thr128, Arg142, Gln223, Thr238, and Arg302. The active-site Proton donor is His41. Residue 298-304 (TTTGRPR) participates in substrate binding. GTP is bound by residues Arg304, 330–332 (SID), and 412–414 (SVG).

Belongs to the adenylosuccinate synthetase family. As to quaternary structure, homodimer. Mg(2+) is required as a cofactor.

Its subcellular location is the cytoplasm. It carries out the reaction IMP + L-aspartate + GTP = N(6)-(1,2-dicarboxyethyl)-AMP + GDP + phosphate + 2 H(+). It functions in the pathway purine metabolism; AMP biosynthesis via de novo pathway; AMP from IMP: step 1/2. In terms of biological role, plays an important role in the de novo pathway of purine nucleotide biosynthesis. Catalyzes the first committed step in the biosynthesis of AMP from IMP. This Streptococcus equi subsp. equi (strain 4047) protein is Adenylosuccinate synthetase.